Consider the following 411-residue polypeptide: Na(+)-translocating NADH-quinone reductase subunit F (411 aa).

A helical transmembrane segment spans residues 6-26; sequence AIGGVAMFTLIIMGLVAIILA. Residues 35 to 129 enclose the 2Fe-2S ferredoxin-type domain; the sequence is GDVTIHINDN…DMKIEIDPEF (95 aa). [2Fe-2S] cluster is bound by residues cysteine 72, cysteine 78, cysteine 81, and cysteine 113. Residues 132–273 form the FAD-binding FR-type domain; it reads VQKWECEVIS…SGPYGEFFAK (142 aa).

It belongs to the NqrF family. Composed of six subunits; NqrA, NqrB, NqrC, NqrD, NqrE and NqrF. It depends on [2Fe-2S] cluster as a cofactor. FAD is required as a cofactor.

It is found in the cell inner membrane. It carries out the reaction a ubiquinone + n Na(+)(in) + NADH + H(+) = a ubiquinol + n Na(+)(out) + NAD(+). In terms of biological role, NQR complex catalyzes the reduction of ubiquinone-1 to ubiquinol by two successive reactions, coupled with the transport of Na(+) ions from the cytoplasm to the periplasm. The first step is catalyzed by NqrF, which accepts electrons from NADH and reduces ubiquinone-1 to ubisemiquinone by a one-electron transfer pathway. This chain is Na(+)-translocating NADH-quinone reductase subunit F, found in Psychrobacter cryohalolentis (strain ATCC BAA-1226 / DSM 17306 / VKM B-2378 / K5).